Here is a 232-residue protein sequence, read N- to C-terminus: 7-cyano-7-deazaguanine synthase (232 aa).

ATP is bound at residue 11-21; the sequence is ASGGMDSATAA. Residues Cys-192, Cys-200, Cys-203, and Cys-206 each coordinate Zn(2+).

The protein belongs to the QueC family. Requires Zn(2+) as cofactor.

The catalysed reaction is 7-carboxy-7-deazaguanine + NH4(+) + ATP = 7-cyano-7-deazaguanine + ADP + phosphate + H2O + H(+). It participates in purine metabolism; 7-cyano-7-deazaguanine biosynthesis. In terms of biological role, catalyzes the ATP-dependent conversion of 7-carboxy-7-deazaguanine (CDG) to 7-cyano-7-deazaguanine (preQ(0)). This Haloarcula marismortui (strain ATCC 43049 / DSM 3752 / JCM 8966 / VKM B-1809) (Halobacterium marismortui) protein is 7-cyano-7-deazaguanine synthase.